A 303-amino-acid chain; its full sequence is ATP synthase gamma chain (303 aa).

This sequence belongs to the ATPase gamma chain family. In terms of assembly, F-type ATPases have 2 components, CF(1) - the catalytic core - and CF(0) - the membrane proton channel. CF(1) has five subunits: alpha(3), beta(3), gamma(1), delta(1), epsilon(1). CF(0) has three main subunits: a, b and c.

The protein resides in the cell membrane. Its function is as follows. Produces ATP from ADP in the presence of a proton gradient across the membrane. The gamma chain is believed to be important in regulating ATPase activity and the flow of protons through the CF(0) complex. The sequence is that of ATP synthase gamma chain from Oenococcus oeni (strain ATCC BAA-331 / PSU-1).